A 206-amino-acid polypeptide reads, in one-letter code: Pyridoxal 5'-phosphate synthase subunit PdxT (206 aa).

59-61 contributes to the L-glutamine binding site; sequence GES. The active-site Nucleophile is the Cys91. L-glutamine is bound by residues Arg123 and 151-152; that span reads IR. Active-site charge relay system residues include His187 and Glu189.

The protein belongs to the glutaminase PdxT/SNO family. In terms of assembly, in the presence of PdxS, forms a dodecamer of heterodimers. Only shows activity in the heterodimer.

The enzyme catalyses aldehydo-D-ribose 5-phosphate + D-glyceraldehyde 3-phosphate + L-glutamine = pyridoxal 5'-phosphate + L-glutamate + phosphate + 3 H2O + H(+). It carries out the reaction L-glutamine + H2O = L-glutamate + NH4(+). It functions in the pathway cofactor biosynthesis; pyridoxal 5'-phosphate biosynthesis. In terms of biological role, catalyzes the hydrolysis of glutamine to glutamate and ammonia as part of the biosynthesis of pyridoxal 5'-phosphate. The resulting ammonia molecule is channeled to the active site of PdxS. In Mycobacterium sp. (strain JLS), this protein is Pyridoxal 5'-phosphate synthase subunit PdxT.